Consider the following 876-residue polypeptide: Leucine--tRNA ligase (876 aa).

A 'HIGH' region motif is present at residues 43–53 (PYPSGRIHMGH). Positions 630-634 (KMSKS) match the 'KMSKS' region motif. Lys-633 provides a ligand contact to ATP.

It belongs to the class-I aminoacyl-tRNA synthetase family.

It is found in the cytoplasm. It carries out the reaction tRNA(Leu) + L-leucine + ATP = L-leucyl-tRNA(Leu) + AMP + diphosphate. This Methylocella silvestris (strain DSM 15510 / CIP 108128 / LMG 27833 / NCIMB 13906 / BL2) protein is Leucine--tRNA ligase.